The following is a 429-amino-acid chain: Formate-dependent phosphoribosylglycinamide formyltransferase (429 aa).

N(1)-(5-phospho-beta-D-ribosyl)glycinamide contacts are provided by residues 26 to 27 (EL) and glutamate 86. Residues arginine 118, lysine 159, 199 to 202 (EEHI), and glutamate 207 each bind ATP. The ATP-grasp domain maps to 123 to 319 (ETLVKEAKVP…EFGLHLRAVL (197 aa)). Glutamate 276 and glutamate 288 together coordinate Mg(2+). N(1)-(5-phospho-beta-D-ribosyl)glycinamide is bound by residues aspartate 295, lysine 375, and 382 to 383 (RR).

This sequence belongs to the PurK/PurT family. In terms of assembly, homodimer.

It carries out the reaction N(1)-(5-phospho-beta-D-ribosyl)glycinamide + formate + ATP = N(2)-formyl-N(1)-(5-phospho-beta-D-ribosyl)glycinamide + ADP + phosphate + H(+). It participates in purine metabolism; IMP biosynthesis via de novo pathway; N(2)-formyl-N(1)-(5-phospho-D-ribosyl)glycinamide from N(1)-(5-phospho-D-ribosyl)glycinamide (formate route): step 1/1. Its function is as follows. Involved in the de novo purine biosynthesis. Catalyzes the transfer of formate to 5-phospho-ribosyl-glycinamide (GAR), producing 5-phospho-ribosyl-N-formylglycinamide (FGAR). Formate is provided by PurU via hydrolysis of 10-formyl-tetrahydrofolate. This is Formate-dependent phosphoribosylglycinamide formyltransferase from Pyrococcus abyssi (strain GE5 / Orsay).